Reading from the N-terminus, the 391-residue chain is Processive diacylglycerol beta-glucosyltransferase (391 aa).

Belongs to the glycosyltransferase 28 family. UgtP subfamily.

It is found in the cell membrane. The enzyme catalyses a 1,2-diacyl-3-O-(beta-D-glucopyranosyl)-sn-glycerol + UDP-alpha-D-glucose = a 1,2-diacyl-3-O-(beta-D-Glc-(1-&gt;6)-beta-D-Glc)-sn-glycerol + UDP + H(+). It carries out the reaction a 1,2-diacyl-sn-glycerol + UDP-alpha-D-glucose = a 1,2-diacyl-3-O-(beta-D-glucopyranosyl)-sn-glycerol + UDP + H(+). The protein operates within glycolipid metabolism; diglucosyl-diacylglycerol biosynthesis. Functionally, processive glucosyltransferase involved in the biosynthesis of both the bilayer- and non-bilayer-forming membrane glucolipids. Is able to successively transfer two glucosyl residues to diacylglycerol (DAG), thereby catalyzing the formation of beta-monoglucosyl-DAG (3-O-(beta-D-glucopyranosyl)-1,2-diacyl-sn-glycerol) and beta-diglucosyl-DAG (3-O-(beta-D-glucopyranosyl-beta-(1-&gt;6)-D-glucopyranosyl)-1,2-diacyl-sn-glycerol). Beta-diglucosyl-DAG is the predominant glycolipid found in Bacillales and is also used as a membrane anchor for lipoteichoic acid (LTA). This Staphylococcus epidermidis (strain ATCC 12228 / FDA PCI 1200) protein is Processive diacylglycerol beta-glucosyltransferase.